The following is a 328-amino-acid chain: V-type sodium ATPase subunit C (328 aa).

The protein belongs to the V-ATPase V0D/AC39 subunit family.

Functionally, involved in ATP-driven sodium extrusion. The sequence is that of V-type sodium ATPase subunit C (ntpC) from Enterococcus hirae (strain ATCC 9790 / DSM 20160 / JCM 8729 / LMG 6399 / NBRC 3181 / NCIMB 6459 / NCDO 1258 / NCTC 12367 / WDCM 00089 / R).